A 644-amino-acid polypeptide reads, in one-letter code: Neurofilament medium polypeptide (644 aa).

Residues V1 to Q33 are coil 1B. The IF rod domain occupies V1–F197. S11 is subject to Phosphoserine. The linker 12 stretch occupies residues I34–D50. Positions I51–Q72 are coil 2A. The interval A73–W76 is linker 2. The segment at F77 to F197 is coil 2B. Y105 bears the Phosphotyrosine mark. S131, S203, and S215 each carry phosphoserine. Residues S198–S643 are tail. T217 carries an O-linked (GlcNAc) threonine glycan. A phosphoserine mark is found at S253 and S269. The interval V270–V582 is disordered. A compositionally biased stretch (acidic residues) spans E274–V292. S298 bears the Phosphoserine mark. Positions K308–E328 are enriched in acidic residues. Residues G329–G350 are compositionally biased toward basic and acidic residues. Phosphoserine is present on residues S332, S340, S345, and S346. Acidic residues predominate over residues E351 to A368. T357 carries the post-translational modification Phosphothreonine. A compositionally biased stretch (basic and acidic residues) spans K369–K400. A phosphoserine mark is found at S401, S406, S442, and S465. Basic and acidic residues predominate over residues G422–E470. Positions E474 to K483 are enriched in low complexity. The span at G485–E508 shows a compositional bias: basic and acidic residues. 3 positions are modified to phosphoserine: S512, S550, and S566. Residues T545 to G557 are compositionally biased toward basic and acidic residues. Residues A568–V582 show a composition bias toward basic and acidic residues.

This sequence belongs to the intermediate filament family. Forms heterodimers with NEFL; which can further hetero-oligomerize (in vitro). Forms heterodimers with INA (in vitro). Post-translationally, there are a number of repeats of the tripeptide K-S-P, NFM is phosphorylated on a number of the serines in this motif. It is thought that phosphorylation of NFM results in the formation of interfilament cross bridges that are important in the maintenance of axonal caliber. Phosphorylation seems to play a major role in the functioning of the larger neurofilament polypeptides (NF-M and NF-H), the levels of phosphorylation being altered developmentally and coincidentally with a change in the neurofilament function. In terms of processing, phosphorylated in the head and rod regions by the PKC kinase PKN1, leading to the inhibition of polymerization.

It is found in the cytoplasm. The protein localises to the cytoskeleton. Its subcellular location is the cell projection. The protein resides in the axon. Functionally, neurofilaments usually contain three intermediate filament proteins: NEFL, NEFM, and NEFH which are involved in the maintenance of neuronal caliber. May additionally cooperate with the neuronal intermediate filament proteins PRPH and INA to form neuronal filamentous networks. The chain is Neurofilament medium polypeptide (NEFM) from Oryctolagus cuniculus (Rabbit).